The sequence spans 266 residues: MEAAQAGDLTRRQELLAPPCLDTESLRKSRPPALEPGALRCLTPNIRSLWPTCQDSVSTALPFLQEKEKGLPGSPSPATQVLGSCWELMVIGMSDHLSMARNPRGTQCPNLEISSATSPASLQRRPRKQLNPRMGIEKVDPRFKGVTLEFQIQPDSSLQIVPTYSLPGRSCSQKLPASPSKALASPGSSEALGPRRCASCRTQRTPLWRDAEDGTPLCNACGIRYKKYGTRCSSCWLVPRKSIQPKRLCGRCGMSQDPHLSPTQEL.

Disordered regions lie at residues 1 to 31 (MEAAQAGDLTRRQELLAPPCLDTESLRKSRP), 106 to 129 (TQCPNLEISSATSPASLQRRPRKQ), and 171 to 191 (CSQKLPASPSKALASPGSSEA). A compositionally biased stretch (polar residues) spans 106–121 (TQCPNLEISSATSPAS). A GATA-type zinc finger spans residues 197 to 221 (CASCRTQRTPLWRDAEDGTPLCNAC).

As to expression, specifically expressed in adult testis and ovary. Expressed at high levels in the somatic cells of the developing gonads, including Leydig cells in the testes and granulosa cells in the ovaries.

Its subcellular location is the nucleus. Transcriptional regulator that plays a key role in germ cell development. Determines the oogenic fate by activating key genes for the oogenic program and meiotic prophase entry. Acts downstream of bone morphogenetic protein (BMP) by regulating expression of genes required for the oogenic programs, which are repressed by Polycomb activities in sexually uncommitted germ cells. Regulates expression of STRA8, a central downstream effector for the meiotic program. Acts independently of retinoic acid (RA). In males, not required for germ-cell sex determination, but required to allow the spermatogonia to efficiently accomplish the meiotic prophase. The chain is GATA-type zinc finger protein 1 from Mus musculus (Mouse).